Here is a 920-residue protein sequence, read N- to C-terminus: MPSPAGRLHRIRYIRLKKSSPDCRATITSGSADGQRRSPRLTNLLVVAAWVAAAVIANLLLTFTQAEPHDTSPALLPQDAKTAAATSRIAQAFPGTGSNAIAYLVVEGGSTLEPQDQPYYDAAVGALRADTRHVGSVLDWWSDPVTAPLGTSPDGRSATAMVWLRGEAGTTQAAESLDAVRSVLRQLPPSEGLRASIVVPAITNDMPMQITAWQSATIVTVAAVIAVLLLLRARLSVRAAAIVLLTADLSLAVAWPLAAVVRGHDWGTDSVFSWTLAAVLTIGTITAATMLAARLGSDAGHSAAPTYRDSLPAFALPGACVAIFTGPLLLARTPALHGVGTAGLGVFVALAASLTVLPALIALAGASRQLPAPTTGAGWTGRLSLPVSSASALGTAAVLAICMLPIIGMRWGVAENPTRQGGAQVLPGNALPDVVVIKSARDLRDPAALIAINQVSHRLVEVPGVRKVESAAWPAGVPWTDASLSSAAGRLADQLGQQAGSFVPAVTAIKSMKSIIEQMSGAVDQLDSTVNVTLAGARQAQQYLDPMLAAARNLKNKTTELSEYLETIHTWIVGFTNCPDDVLCTAMRKVIEPYDIVVTGMNELSTGADRISAISTQTMSALSSAPRMVAQMRSALAQVRSFVPKLETTIQDAMPQIAQASAMLKNLSADFADTGEGGFHLSRKDLADPSYRHVRESMFSSDGTATRLFLYSDGQLDLAAAARAQQLEIAAGKAMKYGSLVDSQVTVGGAAQIAAAVRDALIHDAVLLAVILLTVVALASMWRGAVHGAAVGVGVLASYLAALGVSIALWQHLLDRELNALVPLVSFAVLASCGVPYLVAGIKAGRIADEATGARSKGAVSGRGAVAPLAALGGVFGAGLVLVSGGSFSVLSQIGTVVVLGLGVLITVQRAWLPTTPGRR.

The next 12 membrane-spanning stretches (helical) occupy residues 44 to 64 (LLVV…LTFT), 210 to 230 (ITAW…VLLL), 241 to 261 (AIVL…AAVV), 271 to 291 (VFSW…ATML), 311 to 331 (LPAF…LLLA), 344 to 364 (LGVF…IALA), 389 to 409 (SASA…IIGM), 761 to 781 (LIHD…LASM), 790 to 810 (AVGV…IALW), 822 to 842 (VPLV…VAGI), 864 to 884 (GAVA…VLVS), and 888 to 908 (FSVL…LITV).

This sequence belongs to the resistance-nodulation-cell division (RND) (TC 2.A.6) family. MmpL subfamily.

The protein localises to the cell membrane. This Mycobacterium bovis (strain ATCC BAA-935 / AF2122/97) protein is Probable transport protein MmpL7 (mmpL7).